The following is a 196-amino-acid chain: Imidazoleglycerol-phosphate dehydratase (196 aa).

Belongs to the imidazoleglycerol-phosphate dehydratase family.

Its subcellular location is the cytoplasm. The catalysed reaction is D-erythro-1-(imidazol-4-yl)glycerol 3-phosphate = 3-(imidazol-4-yl)-2-oxopropyl phosphate + H2O. The protein operates within amino-acid biosynthesis; L-histidine biosynthesis; L-histidine from 5-phospho-alpha-D-ribose 1-diphosphate: step 6/9. The sequence is that of Imidazoleglycerol-phosphate dehydratase from Dehalococcoides mccartyi (strain CBDB1).